The primary structure comprises 610 residues: Chaperone protein DnaK (610 aa).

Threonine 173 carries the post-translational modification Phosphothreonine; by autocatalysis. 2 disordered regions span residues 525–544 and 576–610; these read ENIG…ALKT and AAQQ…DDKK. Over residues 529–542 the composition is skewed to basic and acidic residues; sequence EEDKKSAEEKKDAL. Over residues 576–592 the composition is skewed to low complexity; that stretch reads AAQQQQQAQGANAGQNN. The segment covering 599–610 has biased composition (basic and acidic residues); the sequence is AEFKEVKDDDKK.

Belongs to the heat shock protein 70 family.

Acts as a chaperone. In Staphylococcus aureus (strain Mu3 / ATCC 700698), this protein is Chaperone protein DnaK.